A 689-amino-acid polypeptide reads, in one-letter code: DNA ligase (689 aa).

NAD(+) is bound by residues 40–44 (DSEYD), 89–90 (SL), and glutamate 121. The active-site N6-AMP-lysine intermediate is the lysine 123. Arginine 144, glutamate 179, lysine 295, and lysine 319 together coordinate NAD(+). The Zn(2+) site is built by cysteine 413, cysteine 416, cysteine 431, and cysteine 437. Residues 610-689 (REQSSLTDKI…EEWLTLIKNV (80 aa)) enclose the BRCT domain.

Belongs to the NAD-dependent DNA ligase family. LigA subfamily. Mg(2+) is required as a cofactor. It depends on Mn(2+) as a cofactor.

It carries out the reaction NAD(+) + (deoxyribonucleotide)n-3'-hydroxyl + 5'-phospho-(deoxyribonucleotide)m = (deoxyribonucleotide)n+m + AMP + beta-nicotinamide D-nucleotide.. Its function is as follows. DNA ligase that catalyzes the formation of phosphodiester linkages between 5'-phosphoryl and 3'-hydroxyl groups in double-stranded DNA using NAD as a coenzyme and as the energy source for the reaction. It is essential for DNA replication and repair of damaged DNA. In Rickettsia massiliae (strain Mtu5), this protein is DNA ligase.